We begin with the raw amino-acid sequence, 972 residues long: Serine/threonine-protein kinase ATG1 (972 aa).

The Protein kinase domain occupies 18–319 (YVVEKEIGRG…FTEFFSNGLV (302 aa)). ATP is bound by residues 24–32 (IGRGSFAVV) and K48. D166 serves as the catalytic Proton acceptor. Disordered stretches follow at residues 359-394 (KRAS…QSDQ), 424-444 (YNNQ…SNGR), 467-506 (ALQS…HRTT), 562-605 (ASQA…SRRP), and 743-764 (DDEE…NSSG). The segment covering 424-436 (YNNQEERSNEERQ) has biased composition (basic and acidic residues). The span at 562–584 (ASQALQMARHSSTSVSAANTAKQ) shows a compositional bias: polar residues. Low complexity predominate over residues 585–605 (TLLRRNSRTLSSSGASTSRRP). Basic and acidic residues predominate over residues 750 to 759 (EHSPGAETYR).

Belongs to the protein kinase superfamily. Ser/Thr protein kinase family. APG1/unc-51/ULK1 subfamily. As to quaternary structure, homodimer. Forms a ternary complex with ATG13 and ATG17.

It localises to the cytoplasm. It is found in the preautophagosomal structure membrane. It catalyses the reaction L-seryl-[protein] + ATP = O-phospho-L-seryl-[protein] + ADP + H(+). The catalysed reaction is L-threonyl-[protein] + ATP = O-phospho-L-threonyl-[protein] + ADP + H(+). Its function is as follows. Serine/threonine protein kinase involved in the cytoplasm to vacuole transport (Cvt) and found to be essential in autophagy, where it is required for the formation of autophagosomes. Involved in the clearance of protein aggregates which cannot be efficiently cleared by the proteasome. Required for selective autophagic degradation of the nucleus (nucleophagy) as well as for mitophagy which contributes to regulate mitochondrial quantity and quality by eliminating the mitochondria to a basal level to fulfill cellular energy requirements and preventing excess ROS production. Also involved in endoplasmic reticulum-specific autophagic process, in selective removal of ER-associated degradation (ERAD) substrates. Plays a key role in ATG9 and ATG23 cycling through the pre-autophagosomal structure and is necessary to promote ATG18 binding to ATG9 through phosphorylation of ATG9. Catalyzes phosphorylation of ATG4, decreasing the interaction between ATG4 and ATG8 and impairing deconjugation of PE-conjugated forms of ATG8. The protein is Serine/threonine-protein kinase ATG1 of Eremothecium gossypii (strain ATCC 10895 / CBS 109.51 / FGSC 9923 / NRRL Y-1056) (Yeast).